The sequence spans 292 residues: Insulin-like growth factor-binding protein 3 (292 aa).

The N-terminal stretch at 1 to 27 is a signal peptide; the sequence is MHPARPALWAAALTALTLLRGPPVARA. The 84-residue stretch at 36–119 folds into the IGFBP N-terminal domain; that stretch reads PVVRCEPCDA…LNGRGFCANA (84 aa). Cystine bridges form between cysteine 40–cysteine 69, cysteine 43–cysteine 71, cysteine 51–cysteine 72, cysteine 60–cysteine 75, cysteine 83–cysteine 96, and cysteine 90–cysteine 116. N-linked (GlcNAc...) asparagine glycosylation is found at asparagine 118 and asparagine 137. Disordered regions lie at residues 128 to 152 and 178 to 212; these read YLPSQPAPGNISESEEEHNAGSVES and KGHARDSQRYKVDYESQSTDTQNFSSESKRETEYG. Position 149 is a phosphoserine (serine 149). Positions 178–191 are enriched in basic and acidic residues; it reads KGHARDSQRYKVDY. Residues 192-203 are compositionally biased toward polar residues; the sequence is ESQSTDTQNFSS. Asparagine 200 is a glycosylation site (N-linked (GlcNAc...) asparagine). Position 202 is a phosphoserine (serine 202). The Thyroglobulin type-1 domain maps to 211–286; the sequence is YGPCRREMED…DTKGKDDVHC (76 aa). 3 disulfides stabilise this stretch: cysteine 214-cysteine 241, cysteine 252-cysteine 263, and cysteine 265-cysteine 286.

As to quaternary structure, interacts with XLKD1. Binds IGF2 more than IGF1. Forms a ternary complex of about 140 to 150 kDa with IGF1 or IGF2 and a 85 kDa glycoprotein (ALS). Interacts with TMEM219. In terms of processing, phosphorylated by FAM20C in the extracellular medium.

It is found in the secreted. Functionally, IGF-binding proteins prolong the half-life of the IGFs and have been shown to either inhibit or stimulate the growth promoting effects of the IGFs on cell culture. They alter the interaction of IGFs with their cell surface receptors. Also exhibits IGF-independent antiproliferative and apoptotic effects mediated by its receptor TMEM219/IGFBP-3R. Promotes testicular germ cell apoptosis. This Mus musculus (Mouse) protein is Insulin-like growth factor-binding protein 3 (Igfbp3).